The sequence spans 434 residues: 5-methylthioadenosine/S-adenosylhomocysteine deaminase (434 aa).

Zn(2+)-binding residues include His-66 and His-68. Residues Glu-95, Arg-148, and His-188 each contribute to the substrate site. His-215 provides a ligand contact to Zn(2+). Residues Glu-218 and Asp-304 each contribute to the substrate site. Asp-304 is a Zn(2+) binding site.

The protein belongs to the metallo-dependent hydrolases superfamily. MTA/SAH deaminase family. Requires Zn(2+) as cofactor.

The enzyme catalyses S-adenosyl-L-homocysteine + H2O + H(+) = S-inosyl-L-homocysteine + NH4(+). It carries out the reaction S-methyl-5'-thioadenosine + H2O + H(+) = S-methyl-5'-thioinosine + NH4(+). Its function is as follows. Catalyzes the deamination of 5-methylthioadenosine and S-adenosyl-L-homocysteine into 5-methylthioinosine and S-inosyl-L-homocysteine, respectively. Is also able to deaminate adenosine. The sequence is that of 5-methylthioadenosine/S-adenosylhomocysteine deaminase from Shouchella clausii (strain KSM-K16) (Alkalihalobacillus clausii).